The chain runs to 225 residues: Chromosome partition protein MukE (225 aa).

The interval 197–225 (RDGEAMPIENHLQLNDETEENQPDSGEEE) is disordered. The segment covering 212–225 (DETEENQPDSGEEE) has biased composition (acidic residues).

This sequence belongs to the MukE family. As to quaternary structure, interacts, and probably forms a ternary complex, with MukF and MukB. The complex formation is stimulated by calcium or magnesium.

It is found in the cytoplasm. It localises to the nucleoid. Functionally, involved in chromosome condensation, segregation and cell cycle progression. May participate in facilitating chromosome segregation by condensation DNA from both sides of a centrally located replisome during cell division. Probably acts via its interaction with MukB and MukF. The protein is Chromosome partition protein MukE of Escherichia coli O157:H7.